Reading from the N-terminus, the 140-residue chain is Ribonuclease P protein component (140 aa).

It belongs to the RnpA family. As to quaternary structure, consists of a catalytic RNA component (M1 or rnpB) and a protein subunit.

The enzyme catalyses Endonucleolytic cleavage of RNA, removing 5'-extranucleotides from tRNA precursor.. In terms of biological role, RNaseP catalyzes the removal of the 5'-leader sequence from pre-tRNA to produce the mature 5'-terminus. It can also cleave other RNA substrates such as 4.5S RNA. The protein component plays an auxiliary but essential role in vivo by binding to the 5'-leader sequence and broadening the substrate specificity of the ribozyme. This is Ribonuclease P protein component from Ralstonia pickettii (strain 12J).